We begin with the raw amino-acid sequence, 78 residues long: Toxin OAIP 5 (78 aa).

Residues 1–19 form the signal peptide; it reads MLIVILTCALLVIYHAAAA. Residues 20-40 constitute a propeptide that is removed on maturation; it reads EELEAKDVIESKALATLDEER. 3 disulfides stabilise this stretch: Cys43–Cys56, Cys47–Cys70, and Cys64–Cys75.

It belongs to the neurotoxin 12 (Hwtx-2) family. 05 (OAIP-5) subfamily. As to expression, expressed by the venom gland.

The protein localises to the secreted. Probable ion channel inhibitor. Shows insecticidal activity when injected into mealworms. This Selenotypus plumipes (Australian featherleg tarantula) protein is Toxin OAIP 5.